The sequence spans 506 residues: Histidine--tRNA ligase, mitochondrial (506 aa).

A mitochondrion-targeting transit peptide spans 1-33 (MPLLGLLPRRAWASLLSQLLRPPCASCTGAVRC). Ser-67 bears the Phosphoserine mark. Residues 131 to 133 (DLT), Arg-158, Gln-174, Asp-178, Arg-327, and 331 to 332 (YY) contribute to the L-histidine site. Lys-444 bears the N6-acetyllysine mark.

The protein belongs to the class-II aminoacyl-tRNA synthetase family. Homodimer. A high level expression is seen in the heart, kidney and skeletal muscle while a lower level expression is seen in the brain and liver.

Its subcellular location is the mitochondrion. The catalysed reaction is tRNA(His) + L-histidine + ATP = L-histidyl-tRNA(His) + AMP + diphosphate + H(+). Its function is as follows. Mitochondrial aminoacyl-tRNA synthetase that catalyzes the ATP-dependent ligation of histidine to the 3'-end of its cognate tRNA, via the formation of an aminoacyl-adenylate intermediate (His-AMP). The sequence is that of Histidine--tRNA ligase, mitochondrial (HARS2) from Homo sapiens (Human).